Here is a 187-residue protein sequence, read N- to C-terminus: uncharacterized protein (187 aa).

Positions 53–187 (RKPHIYSPAD…CLQTSYVVPG (135 aa)) constitute a Tyr recombinase domain. Residues arginine 98 and lysine 123 contribute to the active site.

The protein belongs to the 'phage' integrase family.

This is an uncharacterized protein from Sinorhizobium fredii (strain NBRC 101917 / NGR234).